Here is a 227-residue protein sequence, read N- to C-terminus: Probable septum site-determining protein MinC (227 aa).

This sequence belongs to the MinC family. As to quaternary structure, interacts with MinD and FtsZ.

Functionally, cell division inhibitor that blocks the formation of polar Z ring septums. Rapidly oscillates between the poles of the cell to destabilize FtsZ filaments that have formed before they mature into polar Z rings. Prevents FtsZ polymerization. The protein is Probable septum site-determining protein MinC of Geobacillus kaustophilus (strain HTA426).